Reading from the N-terminus, the 34-residue chain is Dermaseptin-S2 (34 aa).

Belongs to the frog skin active peptide (FSAP) family. Dermaseptin subfamily. As to expression, expressed by the skin glands.

The protein localises to the secreted. Its function is as follows. Potent antimicrobial peptide with activity against bacteria and protozoa. Also has activity against fungi. Probably acts by disturbing membrane functions with its amphipathic structure. The polypeptide is Dermaseptin-S2 (Phyllomedusa sauvagei (Sauvage's leaf frog)).